We begin with the raw amino-acid sequence, 344 residues long: Phosphate acyltransferase (344 aa).

It belongs to the PlsX family. As to quaternary structure, homodimer. Probably interacts with PlsY.

The protein resides in the cytoplasm. It catalyses the reaction a fatty acyl-[ACP] + phosphate = an acyl phosphate + holo-[ACP]. The protein operates within lipid metabolism; phospholipid metabolism. Catalyzes the reversible formation of acyl-phosphate (acyl-PO(4)) from acyl-[acyl-carrier-protein] (acyl-ACP). This enzyme utilizes acyl-ACP as fatty acyl donor, but not acyl-CoA. This Paracidovorax citrulli (strain AAC00-1) (Acidovorax citrulli) protein is Phosphate acyltransferase.